The sequence spans 90 residues: uncharacterized protein (90 aa).

Residues 12 to 32 (VVGGLSFWSFSAGVIMIVNAF) traverse the membrane as a helical segment.

Its subcellular location is the membrane. This is an uncharacterized protein from Mycoplasma pneumoniae (strain ATCC 29342 / M129 / Subtype 1) (Mycoplasmoides pneumoniae).